The primary structure comprises 79 residues: Neurotoxin BmK-M9 (79 aa).

The N-terminal stretch at 1 to 14 (MISFALLLMTGVES) is a signal peptide. Residues 16–78 (RDAYIAKPEN…VPIRVPGKCH (63 aa)) enclose the LCN-type CS-alpha/beta domain. 4 disulfide bridges follow: C26-C77, C30-C50, C36-C60, and C40-C62. Residue R79 is a propeptide, removed by a carboxypeptidase.

It belongs to the long (4 C-C) scorpion toxin superfamily. Sodium channel inhibitor family. Alpha subfamily. In terms of tissue distribution, expressed by the venom gland.

The protein resides in the secreted. In terms of biological role, binds to sodium channels (Nav) and inhibits the inactivation of the activated channels, thereby blocking neuronal transmission. This toxin is active against mammals. The polypeptide is Neurotoxin BmK-M9 (Olivierus martensii (Manchurian scorpion)).